Reading from the N-terminus, the 54-residue chain is Large ribosomal subunit protein bL33 (54 aa).

This sequence belongs to the bacterial ribosomal protein bL33 family.

The protein is Large ribosomal subunit protein bL33 of Buchnera aphidicola subsp. Cinara cedri (strain Cc).